Reading from the N-terminus, the 313-residue chain is Aspartate carbamoyltransferase catalytic subunit (313 aa).

Positions 58 and 59 each coordinate carbamoyl phosphate. Residue Lys86 participates in L-aspartate binding. Residues Arg108, His136, and Gln139 each contribute to the carbamoyl phosphate site. Positions 169 and 223 each coordinate L-aspartate. 2 residues coordinate carbamoyl phosphate: Gly265 and Pro266.

It belongs to the aspartate/ornithine carbamoyltransferase superfamily. ATCase family. In terms of assembly, heterododecamer (2C3:3R2) of six catalytic PyrB chains organized as two trimers (C3), and six regulatory PyrI chains organized as three dimers (R2).

The catalysed reaction is carbamoyl phosphate + L-aspartate = N-carbamoyl-L-aspartate + phosphate + H(+). It functions in the pathway pyrimidine metabolism; UMP biosynthesis via de novo pathway; (S)-dihydroorotate from bicarbonate: step 2/3. Catalyzes the condensation of carbamoyl phosphate and aspartate to form carbamoyl aspartate and inorganic phosphate, the committed step in the de novo pyrimidine nucleotide biosynthesis pathway. This Anaeromyxobacter dehalogenans (strain 2CP-1 / ATCC BAA-258) protein is Aspartate carbamoyltransferase catalytic subunit.